A 435-amino-acid polypeptide reads, in one-letter code: Glutamate-1-semialdehyde 2,1-aminomutase (435 aa).

Lys266 carries the N6-(pyridoxal phosphate)lysine modification.

This sequence belongs to the class-III pyridoxal-phosphate-dependent aminotransferase family. HemL subfamily. As to quaternary structure, homodimer. The cofactor is pyridoxal 5'-phosphate.

It localises to the cytoplasm. The enzyme catalyses (S)-4-amino-5-oxopentanoate = 5-aminolevulinate. It participates in porphyrin-containing compound metabolism; protoporphyrin-IX biosynthesis; 5-aminolevulinate from L-glutamyl-tRNA(Glu): step 2/2. The polypeptide is Glutamate-1-semialdehyde 2,1-aminomutase (Coxiella burnetii (strain CbuK_Q154) (Coxiella burnetii (strain Q154))).